The chain runs to 496 residues: Angiopoietin-2 (496 aa).

The N-terminal stretch at 1–18 (MWQIVFFTLSCDLVLAAA) is a signal peptide. N-linked (GlcNAc...) asparagine glycosylation is found at Asn-89, Asn-119, Asn-133, Asn-151, Asn-240, and Asn-304. Positions 166 to 248 (STNKLEKQIL…VNNSVLQKQQ (83 aa)) form a coiled coil. Residues 275 to 495 (KEEQISFRDC…ATTMMIRPAD (221 aa)) form the Fibrinogen C-terminal domain. An intrachain disulfide couples Cys-284 to Cys-313. Ca(2+) contacts are provided by Asp-429, Asp-431, Cys-433, and Cys-435. Intrachain disulfides connect Cys-433-Cys-435 and Cys-437-Cys-450.

As to quaternary structure, interacts with TEK/TIE2, competing for the same binding site as ANGPT1. Interacts with ITGA5. Interacts with SVEP1/polydom. Interacts with THBD; this interaction significantly inhibits the generation of activated PC and TAFIa/CPB2 by the thrombin/thrombomodulin complex.

The protein localises to the secreted. Binds to TEK/TIE2, competing for the ANGPT1 binding site, and modulating ANGPT1 signaling. Can induce tyrosine phosphorylation of TEK/TIE2 in the absence of ANGPT1. In the absence of angiogenic inducers, such as VEGF, ANGPT2-mediated loosening of cell-matrix contacts may induce endothelial cell apoptosis with consequent vascular regression. In concert with VEGF, it may facilitate endothelial cell migration and proliferation, thus serving as a permissive angiogenic signal. Involved in the regulation of lymphangiogenesis. In Homo sapiens (Human), this protein is Angiopoietin-2 (ANGPT2).